A 489-amino-acid polypeptide reads, in one-letter code: Betaine aldehyde dehydrogenase (489 aa).

K(+) is bound by residues Thr-26 and Asp-93. 150–152 lines the NAD(+) pocket; the sequence is GAW. The Charge relay system role is filled by Lys-162. 176–179 is a binding site for NAD(+); that stretch reads KPSE. Val-180 contacts K(+). Residue 229–232 participates in NAD(+) binding; the sequence is GVET. Leu-245 provides a ligand contact to K(+). Glu-251 serves as the catalytic Proton acceptor. The NAD(+) site is built by Gly-253, Cys-285, and Glu-386. Cys-285 functions as the Nucleophile in the catalytic mechanism. Residue Cys-285 is modified to Cysteine sulfenic acid (-SOH). Residues Lys-456 and Gly-459 each contribute to the K(+) site. The Charge relay system role is filled by Glu-463.

The protein belongs to the aldehyde dehydrogenase family. Dimer of dimers. K(+) is required as a cofactor.

The catalysed reaction is betaine aldehyde + NAD(+) + H2O = glycine betaine + NADH + 2 H(+). The protein operates within amine and polyamine biosynthesis; betaine biosynthesis via choline pathway; betaine from betaine aldehyde: step 1/1. Involved in the biosynthesis of the osmoprotectant glycine betaine. Catalyzes the irreversible oxidation of betaine aldehyde to the corresponding acid. This is Betaine aldehyde dehydrogenase from Burkholderia cenocepacia (strain ATCC BAA-245 / DSM 16553 / LMG 16656 / NCTC 13227 / J2315 / CF5610) (Burkholderia cepacia (strain J2315)).